Reading from the N-terminus, the 165-residue chain is Xanthine-guanine phosphoribosyltransferase (165 aa).

Residues Arg41–Gly42 and Asp98–Thr106 contribute to the 5-phospho-alpha-D-ribose 1-diphosphate site. Position 99 (Asp99) interacts with Mg(2+). 2 residues coordinate guanine: Asp102 and Ile145. Xanthine contacts are provided by Asp102 and Ile145. Residues Asp102–Thr106 and Trp144–Ile145 each bind GMP.

Belongs to the purine/pyrimidine phosphoribosyltransferase family. XGPT subfamily. In terms of assembly, homotetramer. Requires Mg(2+) as cofactor.

It is found in the cell inner membrane. The catalysed reaction is GMP + diphosphate = guanine + 5-phospho-alpha-D-ribose 1-diphosphate. It catalyses the reaction XMP + diphosphate = xanthine + 5-phospho-alpha-D-ribose 1-diphosphate. The enzyme catalyses IMP + diphosphate = hypoxanthine + 5-phospho-alpha-D-ribose 1-diphosphate. It functions in the pathway purine metabolism; GMP biosynthesis via salvage pathway; GMP from guanine: step 1/1. It participates in purine metabolism; XMP biosynthesis via salvage pathway; XMP from xanthine: step 1/1. Its function is as follows. Purine salvage pathway enzyme that catalyzes the transfer of the ribosyl-5-phosphate group from 5-phospho-alpha-D-ribose 1-diphosphate (PRPP) to the N9 position of the 6-oxopurines guanine and xanthine to form the corresponding ribonucleotides GMP (guanosine 5'-monophosphate) and XMP (xanthosine 5'-monophosphate), with the release of PPi. To a lesser extent, also acts on hypoxanthine. This Rhizobium meliloti (strain 1021) (Ensifer meliloti) protein is Xanthine-guanine phosphoribosyltransferase.